Consider the following 135-residue polypeptide: Ribonuclease P protein component (135 aa).

Residues 115–135 (TNETVSPVSDTPLPQHERGSQ) are disordered.

Belongs to the RnpA family. In terms of assembly, consists of a catalytic RNA component (M1 or rnpB) and a protein subunit.

It catalyses the reaction Endonucleolytic cleavage of RNA, removing 5'-extranucleotides from tRNA precursor.. Its function is as follows. RNaseP catalyzes the removal of the 5'-leader sequence from pre-tRNA to produce the mature 5'-terminus. It can also cleave other RNA substrates such as 4.5S RNA. The protein component plays an auxiliary but essential role in vivo by binding to the 5'-leader sequence and broadening the substrate specificity of the ribozyme. The protein is Ribonuclease P protein component of Chloroflexus aurantiacus (strain ATCC 29366 / DSM 635 / J-10-fl).